The chain runs to 164 residues: uncharacterized protein (164 aa).

2 helical membrane passes run 11-31 (FYVNGFFSFLFLFLFLFPSLL) and 51-71 (CQQYSSLAIFTASGFWLLVLV).

The protein localises to the membrane. This is an uncharacterized protein from Saccharomyces cerevisiae (strain ATCC 204508 / S288c) (Baker's yeast).